We begin with the raw amino-acid sequence, 262 residues long: 2-keto-4-pentenoate hydratase (262 aa).

This sequence belongs to the hydratase/decarboxylase family. MhpD subfamily. A divalent metal cation is required as a cofactor.

It catalyses the reaction (S)-4-hydroxy-2-oxopentanoate = (2Z)-2-hydroxypenta-2,4-dienoate + H2O. It participates in aromatic compound metabolism; 3-phenylpropanoate degradation. Its function is as follows. Catalyzes the conversion of 2-hydroxypentadienoic acid (enolic form of 2-oxopent-4-enoate) to 4-hydroxy-2-ketopentanoic acid. The sequence is that of 2-keto-4-pentenoate hydratase from Burkholderia vietnamiensis (strain G4 / LMG 22486) (Burkholderia cepacia (strain R1808)).